A 374-amino-acid chain; its full sequence is Eukaryotic translation initiation factor 3 subunit M (374 aa).

Ser2 bears the N-acetylserine mark. Phosphoserine is present on residues Ser2 and Ser152. Positions 180–339 constitute a PCI domain; it reads AASKVMVELL…RKVVVSHSTH (160 aa). The residue at position 254 (Lys254) is an N6-acetyllysine. Ser367 is subject to Phosphoserine.

It belongs to the eIF-3 subunit M family. In terms of assembly, component of the eukaryotic translation initiation factor 3 (eIF-3) complex, which is composed of 13 subunits: EIF3A, EIF3B, EIF3C, EIF3D, EIF3E, EIF3F, EIF3G, EIF3H, EIF3I, EIF3J, EIF3K, EIF3L and EIF3M. The eIF-3 complex appears to include 3 stable modules: module A is composed of EIF3A, EIF3B, EIF3G and EIF3I; module B is composed of EIF3F, EIF3H, and EIF3M; and module C is composed of EIF3C, EIF3D, EIF3E, EIF3K and EIF3L. EIF3C of module C binds EIF3B of module A and EIF3H of module B, thereby linking the three modules. EIF3J is a labile subunit that binds to the eIF-3 complex via EIF3B. The eIF-3 complex interacts with RPS6KB1 under conditions of nutrient depletion. Mitogenic stimulation leads to binding and activation of a complex composed of MTOR and RPTOR, leading to phosphorylation and release of RPS6KB1 and binding of EIF4B to eIF-3.

It localises to the cytoplasm. Component of the eukaryotic translation initiation factor 3 (eIF-3) complex, which is required for several steps in the initiation of protein synthesis. The eIF-3 complex associates with the 40S ribosome and facilitates the recruitment of eIF-1, eIF-1A, eIF-2:GTP:methionyl-tRNAi and eIF-5 to form the 43S pre-initiation complex (43S PIC). The eIF-3 complex stimulates mRNA recruitment to the 43S PIC and scanning of the mRNA for AUG recognition. The eIF-3 complex is also required for disassembly and recycling of post-termination ribosomal complexes and subsequently prevents premature joining of the 40S and 60S ribosomal subunits prior to initiation. The eIF-3 complex specifically targets and initiates translation of a subset of mRNAs involved in cell proliferation, including cell cycling, differentiation and apoptosis, and uses different modes of RNA stem-loop binding to exert either translational activation or repression. This Pongo abelii (Sumatran orangutan) protein is Eukaryotic translation initiation factor 3 subunit M.